Reading from the N-terminus, the 200-residue chain is Molybdenum cofactor guanylyltransferase (200 aa).

GTP-binding positions include 15–17 (LAG), Lys-28, Asp-74, and Asp-104. Position 104 (Asp-104) interacts with Mg(2+).

Belongs to the MobA family. As to quaternary structure, monomer. The cofactor is Mg(2+).

The protein resides in the cytoplasm. The catalysed reaction is Mo-molybdopterin + GTP + H(+) = Mo-molybdopterin guanine dinucleotide + diphosphate. In terms of biological role, transfers a GMP moiety from GTP to Mo-molybdopterin (Mo-MPT) cofactor (Moco or molybdenum cofactor) to form Mo-molybdopterin guanine dinucleotide (Mo-MGD) cofactor. In Pseudomonas fluorescens (strain Pf0-1), this protein is Molybdenum cofactor guanylyltransferase.